Here is a 219-residue protein sequence, read N- to C-terminus: NAD(P)H-quinone oxidoreductase subunit I (219 aa).

2 4Fe-4S ferredoxin-type domains span residues 55-84 (GRIH…VDWV) and 95-124 (RNYS…MTEE). Positions 64, 67, 70, 74, 104, 107, 110, and 114 each coordinate [4Fe-4S] cluster. The tract at residues 192–219 (LKAAGSMKAAEDERESSSSASNMEESAG) is disordered. Low complexity predominate over residues 208–219 (SSSASNMEESAG).

It belongs to the complex I 23 kDa subunit family. As to quaternary structure, NDH-1 is composed of at least 11 different subunits. Requires [4Fe-4S] cluster as cofactor.

The protein localises to the cellular thylakoid membrane. The enzyme catalyses a plastoquinone + NADH + (n+1) H(+)(in) = a plastoquinol + NAD(+) + n H(+)(out). The catalysed reaction is a plastoquinone + NADPH + (n+1) H(+)(in) = a plastoquinol + NADP(+) + n H(+)(out). Functionally, NDH-1 shuttles electrons from an unknown electron donor, via FMN and iron-sulfur (Fe-S) centers, to quinones in the respiratory and/or the photosynthetic chain. The immediate electron acceptor for the enzyme in this species is believed to be plastoquinone. Couples the redox reaction to proton translocation, and thus conserves the redox energy in a proton gradient. The protein is NAD(P)H-quinone oxidoreductase subunit I of Synechococcus sp. (strain CC9311).